The sequence spans 250 residues: Flavin-dependent thymidylate synthase (250 aa).

The 227-residue stretch at 7–233 (LSVELIACSS…PTVFGDFQVE (227 aa)) folds into the ThyX domain. Residues 92 to 95 (ELVR), 103 to 107 (QLSQR), and R172 each bind dUMP. FAD contacts are provided by residues 95–97 (RHR) and Q103. The ThyX motif signature appears at 95–105 (RHRHFSFSQLS). FAD-binding positions include 188–190 (NFR) and H194. Position 199 (R199) interacts with dUMP. Catalysis depends on R199, which acts as the Involved in ionization of N3 of dUMP, leading to its activation.

Belongs to the thymidylate synthase ThyX family. In terms of assembly, homotetramer. The cofactor is FAD.

It carries out the reaction dUMP + (6R)-5,10-methylene-5,6,7,8-tetrahydrofolate + NADPH + H(+) = dTMP + (6S)-5,6,7,8-tetrahydrofolate + NADP(+). The protein operates within pyrimidine metabolism; dTTP biosynthesis. In terms of biological role, catalyzes the reductive methylation of 2'-deoxyuridine-5'-monophosphate (dUMP) to 2'-deoxythymidine-5'-monophosphate (dTMP) while utilizing 5,10-methylenetetrahydrofolate (mTHF) as the methyl donor, and NADPH and FADH(2) as the reductant. This chain is Flavin-dependent thymidylate synthase, found in Corynebacterium efficiens (strain DSM 44549 / YS-314 / AJ 12310 / JCM 11189 / NBRC 100395).